The sequence spans 522 residues: Probable mannosyltransferase KTR5 (522 aa).

Topologically, residues 1-16 are cytoplasmic; that stretch reads MLLIRRTINAFLGCIH. Residues 17-37 traverse the membrane as a helical; Signal-anchor for type II membrane protein segment; the sequence is CNLTATCILIAFVITMYVVLV. The tract at residues 38 to 82 is stem region; sequence SEPASVDGTMGNFLPFSKMDLATKRDRPFYSNCVNTQDYLLNPSY. The Lumenal portion of the chain corresponds to 38–522; the sequence is SEPASVDGTM…REDYLRQFGN (485 aa). The interval 83–522 is catalytic; the sequence is IKQNASFVML…REDYLRQFGN (440 aa). The N-linked (GlcNAc...) asparagine glycan is linked to N86. Residue E363 is the Nucleophile of the active site.

The protein belongs to the glycosyltransferase 15 family.

It localises to the membrane. Its function is as follows. Possible glycosyltransferase that transfers an alpha-D-mannosyl residue from GDP-mannose into lipid-linked oligosaccharide, forming an alpha-(1-&gt;2)-D-mannosyl-D-mannose linkage. The polypeptide is Probable mannosyltransferase KTR5 (KTR5) (Saccharomyces cerevisiae (strain ATCC 204508 / S288c) (Baker's yeast)).